A 782-amino-acid polypeptide reads, in one-letter code: Endonuclease MutS2 (782 aa).

Residue 336–343 participates in ATP binding; the sequence is GPNTGGKT. A Smr domain is found at 707 to 782; that stretch reads LDLRGYRYED…GFGVTVATLK (76 aa).

The protein belongs to the DNA mismatch repair MutS family. MutS2 subfamily. In terms of assembly, homodimer. Binds to stalled ribosomes, contacting rRNA.

Its function is as follows. Endonuclease that is involved in the suppression of homologous recombination and thus may have a key role in the control of bacterial genetic diversity. In terms of biological role, acts as a ribosome collision sensor, splitting the ribosome into its 2 subunits. Detects stalled/collided 70S ribosomes which it binds and splits by an ATP-hydrolysis driven conformational change. Acts upstream of the ribosome quality control system (RQC), a ribosome-associated complex that mediates the extraction of incompletely synthesized nascent chains from stalled ribosomes and their subsequent degradation. Probably generates substrates for RQC. This chain is Endonuclease MutS2, found in Staphylococcus aureus (strain Mu50 / ATCC 700699).